Reading from the N-terminus, the 442-residue chain is Lysosomal dipeptide transporter MFSD1 (442 aa).

Residues 8–9 (LL) carry the Dileucine internalization motif motif. Helical transmembrane passes span 38 to 58 (LLVLALMCFLGFGSCFCYDNP), 85 to 105 (TVIFSIFVCVGQVIFALGALV), 107 to 127 (AFWLMEVGRFIFGIGGESLAV), 187 to 207 (LLIGGITCLFSLACALILAYL), 238 to 258 (LWLIFVICVCYYAAVFPFIGL), 276 to 296 (AINSVVYIISAPMSPVFGILV), 303 to 323 (IIWVLCAVITTLASHIMLAFT), 333 to 353 (LLGVAYSLLACALWPMVAFVV), 364 to 384 (FMQSIQNLGLAVIAIAAGMIL), and 390 to 410 (LFLEVFFSACVSLSLVAVVML).

It belongs to the major facilitator superfamily. In terms of assembly, homodimer. Interacts with lysosomal protein GLMP (via lumenal domain); the interaction starts while both proteins are still in the endoplasmic reticulum and is required for stabilization of MFSD1 in lysosomes but has no direct effect on its targeting to lysosomes or transporter activity.

It is found in the lysosome membrane. It carries out the reaction L-alpha-aminoacyl-L-arginine(out) = L-alpha-aminoacyl-L-arginine(in). The enzyme catalyses L-arginyl-L-alpha-amino acid(out) = L-arginyl-L-alpha-amino acid(in). The catalysed reaction is L-arginyl-glycine(out) = L-arginyl-glycine(in). It catalyses the reaction L-alpha-aminoacyl-L-lysine(out) = L-alpha-aminoacyl-L-lysine(in). It carries out the reaction L-aspartyl-L-lysine(out) = L-aspartyl-L-lysine(in). The enzyme catalyses L-alanyl-L-lysine(out) = L-alanyl-L-lysine(in). The catalysed reaction is L-lysyl-L-alpha-amino acid(out) = L-lysyl-L-alpha-amino acid(in). It catalyses the reaction L-lysyl-L-alanine(out) = L-lysyl-L-alanine(in). It carries out the reaction L-lysyl-L-lysine(out) = L-lysyl-L-lysine(in). The enzyme catalyses L-lysyl-glycine(out) = L-lysyl-glycine(in). The catalysed reaction is L-alpha-aminoacyl-L-histidine(out) = L-alpha-aminoacyl-L-histidine(in). It catalyses the reaction L-histidyl-L-alpha-amino acid(out) = L-histidyl-L-alpha-amino acid(in). It carries out the reaction L-histidyl-glycine(out) = L-histidyl-glycine(in). In terms of biological role, lysosomal dipeptide uniporter that selectively exports lysine, arginine or histidine-containing dipeptides with a net positive charge from the lysosome lumen into the cytosol. Could play a role in a specific type of protein O-glycosylation indirectly regulating macrophages migration and tissue invasion. Also essential for liver homeostasis. In Gallus gallus (Chicken), this protein is Lysosomal dipeptide transporter MFSD1.